The following is a 306-amino-acid chain: 4-hydroxy-3-methylbut-2-enyl diphosphate reductase (306 aa).

Cysteine 12 provides a ligand contact to [4Fe-4S] cluster. Histidine 41 and histidine 74 together coordinate (2E)-4-hydroxy-3-methylbut-2-enyl diphosphate. 2 residues coordinate dimethylallyl diphosphate: histidine 41 and histidine 74. 2 residues coordinate isopentenyl diphosphate: histidine 41 and histidine 74. Residue cysteine 96 participates in [4Fe-4S] cluster binding. Histidine 124 is a binding site for (2E)-4-hydroxy-3-methylbut-2-enyl diphosphate. Histidine 124 is a binding site for dimethylallyl diphosphate. Histidine 124 contributes to the isopentenyl diphosphate binding site. Residue glutamate 126 is the Proton donor of the active site. Threonine 164 contributes to the (2E)-4-hydroxy-3-methylbut-2-enyl diphosphate binding site. Cysteine 194 is a binding site for [4Fe-4S] cluster. Positions 222, 223, 224, and 266 each coordinate (2E)-4-hydroxy-3-methylbut-2-enyl diphosphate. The dimethylallyl diphosphate site is built by serine 222, serine 223, asparagine 224, and serine 266. 4 residues coordinate isopentenyl diphosphate: serine 222, serine 223, asparagine 224, and serine 266.

Belongs to the IspH family. [4Fe-4S] cluster serves as cofactor.

The catalysed reaction is isopentenyl diphosphate + 2 oxidized [2Fe-2S]-[ferredoxin] + H2O = (2E)-4-hydroxy-3-methylbut-2-enyl diphosphate + 2 reduced [2Fe-2S]-[ferredoxin] + 2 H(+). It catalyses the reaction dimethylallyl diphosphate + 2 oxidized [2Fe-2S]-[ferredoxin] + H2O = (2E)-4-hydroxy-3-methylbut-2-enyl diphosphate + 2 reduced [2Fe-2S]-[ferredoxin] + 2 H(+). It participates in isoprenoid biosynthesis; dimethylallyl diphosphate biosynthesis; dimethylallyl diphosphate from (2E)-4-hydroxy-3-methylbutenyl diphosphate: step 1/1. It functions in the pathway isoprenoid biosynthesis; isopentenyl diphosphate biosynthesis via DXP pathway; isopentenyl diphosphate from 1-deoxy-D-xylulose 5-phosphate: step 6/6. Catalyzes the conversion of 1-hydroxy-2-methyl-2-(E)-butenyl 4-diphosphate (HMBPP) into a mixture of isopentenyl diphosphate (IPP) and dimethylallyl diphosphate (DMAPP). Acts in the terminal step of the DOXP/MEP pathway for isoprenoid precursor biosynthesis. This Ruthia magnifica subsp. Calyptogena magnifica protein is 4-hydroxy-3-methylbut-2-enyl diphosphate reductase.